A 166-amino-acid chain; its full sequence is ATP synthase subunit b (166 aa).

A helical transmembrane segment spans residues 15–37 (TLYYLLIFAALLLLVKHFAWGPV).

This sequence belongs to the ATPase B chain family. In terms of assembly, F-type ATPases have 2 components, F(1) - the catalytic core - and F(0) - the membrane proton channel. F(1) has five subunits: alpha(3), beta(3), gamma(1), delta(1), epsilon(1). F(0) has three main subunits: a(1), b(2) and c(10-14). The alpha and beta chains form an alternating ring which encloses part of the gamma chain. F(1) is attached to F(0) by a central stalk formed by the gamma and epsilon chains, while a peripheral stalk is formed by the delta and b chains.

The protein resides in the cell membrane. F(1)F(0) ATP synthase produces ATP from ADP in the presence of a proton or sodium gradient. F-type ATPases consist of two structural domains, F(1) containing the extramembraneous catalytic core and F(0) containing the membrane proton channel, linked together by a central stalk and a peripheral stalk. During catalysis, ATP synthesis in the catalytic domain of F(1) is coupled via a rotary mechanism of the central stalk subunits to proton translocation. In terms of biological role, component of the F(0) channel, it forms part of the peripheral stalk, linking F(1) to F(0). The polypeptide is ATP synthase subunit b (Lactobacillus johnsonii (strain CNCM I-12250 / La1 / NCC 533)).